The sequence spans 406 residues: MATPGNLGSSVLASKTKTKKKHFVAQKVKLFRASDPLLSVLMWGVNHSINELSHVQIPVMLMPDDFKAYSKIKVDNHLFNKENMPSHFKFKEYCPMVFRNLRERFGIDDQDFQNSLTRSAPLPNDSXARSGARFHTSYDRRYVIKTITSEDVAEMHNILKNYHQHIVECHGITLLPQFLGMYRLNVDGVEIYVIVTRNVFSHRLSVYRKYDLKGSTVAREASDKEKAKELPTLKDNDFINEGQKIYIDDNXKKVFLEKLKKDVEFLAQLKLMDYSLLVGIHDVERAEQEEVECEENDGEEEGESDGTHPVGTPPDSPGNTLNSSPPLAPGEFDPNIDVYGIKCHENSPRKEVYFMAIIDILTHYDAKKKAAHAAKXVKHGAGAEISTVNPEQYSKRFLDFIGHILT.

The residue at position 2 (Ala-2) is an N-acetylalanine. Thr-3 carries the phosphothreonine modification. Ser-14 carries the phosphoserine modification. In terms of domain architecture, PIPK spans 33-405; the sequence is ASDPLLSVLM…RFLDFIGHIL (373 aa). Positions 59 to 65 are required for interaction with PIP5K1A; it reads VMLMPDD. Residues Lys-89 and Lys-145 each carry the N6-acetyllysine modification. The interval 288–329 is disordered; it reads QEEVECEENDGEEEGESDGTHPVGTPPDSPGNTLNSSPPLAP. Residues 289-304 show a composition bias toward acidic residues; sequence EEVECEENDGEEEGES.

As to quaternary structure, homodimer. Interacts with PIP4K2B; the interaction may regulate localization to the nucleus. Probably interacts with PIP5K1A; the interaction inhibits PIP5K1A kinase activity. Post-translationally, phosphorylated in tyrosines. Phosphorylation is induced by light and increases kinase activity.

Its subcellular location is the cell membrane. It localises to the nucleus. The protein resides in the lysosome. The protein localises to the cytoplasm. It is found in the photoreceptor inner segment. Its subcellular location is the cell projection. It localises to the cilium. The protein resides in the photoreceptor outer segment. The enzyme catalyses a 1,2-diacyl-sn-glycero-3-phospho-(1D-myo-inositol-5-phosphate) + ATP = a 1,2-diacyl-sn-glycero-3-phospho-(1D-myo-inositol-4,5-bisphosphate) + ADP + H(+). It carries out the reaction 1,2-dihexadecanoyl-sn-glycero-3-phospho-(1D-myo-inositol-5-phosphate) + ATP = 1,2-dihexadecanoyl-sn-glycero-3-phospho-(1D-myo-inositol-4,5-bisphosphate) + ADP + H(+). The catalysed reaction is 1,2-dihexadecanoyl-sn-glycero-3-phospho-(1D-myo-inositol-5-phosphate) + GTP = 1,2-dihexadecanoyl-sn-glycero-3-phospho-(1D-myo-inositol-4,5-bisphosphate) + GDP + H(+). In rod outer segments, activated by light. Catalyzes the phosphorylation of phosphatidylinositol 5-phosphate (PtdIns5P) on the fourth hydroxyl of the myo-inositol ring, to form phosphatidylinositol 4,5-bisphosphate (PtdIns(4,5)P2). Has both ATP- and GTP-dependent kinase activities. May exert its function by regulating the levels of PtdIns5P, which functions in the cytosol by increasing AKT activity and in the nucleus signals through ING2. May regulate the pool of cytosolic PtdIns5P in response to the activation of tyrosine phosphorylation. May be involved in thrombopoiesis, and the terminal maturation of megakaryocytes and regulation of their size. May negatively regulate insulin-stimulated glucose uptake by lowering the levels of PtdIns5P. This Sus scrofa (Pig) protein is Phosphatidylinositol 5-phosphate 4-kinase type-2 alpha (PIP4K2A).